The primary structure comprises 151 residues: Ribosome maturation factor RimP (151 aa).

It belongs to the RimP family.

It is found in the cytoplasm. Its function is as follows. Required for maturation of 30S ribosomal subunits. The chain is Ribosome maturation factor RimP from Shewanella sediminis (strain HAW-EB3).